The following is a 366-amino-acid chain: 5-hydroxytryptamine receptor 1F (366 aa).

Residues 1 to 24 lie on the Extracellular side of the membrane; the sequence is MDFLNSSDQNLTSEELLNRMPSKI. N-linked (GlcNAc...) asparagine glycosylation is found at Asn-5 and Asn-10. The chain crosses the membrane as a helical span at residues 25–49; sequence LVSLTLSGLALMTTTINCLVITAII. Residues 50 to 59 lie on the Cytoplasmic side of the membrane; the sequence is VTRKLHHPAN. The helical transmembrane segment at 60-81 threads the bilayer; sequence YLICSLAVTDFLVAVLVMPFSI. The Extracellular segment spans residues 82 to 96; it reads VYIVRESWIMGQGLC. Cys-96 and Cys-172 form a disulfide bridge. The helical transmembrane segment at 97 to 119 threads the bilayer; that stretch reads DLWLSVDIICCTCSILHLSAIAL. Positions 103 and 107 each coordinate serotonin. The DRY motif; important for ligand-induced conformation changes signature appears at 120-122; it reads DRY. Over 120–139 the chain is Cytoplasmic; sequence DRYRAITDAVEYARKRTPRH. Residues 140 to 159 traverse the membrane as a helical segment; it reads AGITITTVWVISVFISVPPL. Residues 160 to 178 lie on the Extracellular side of the membrane; sequence FWRHQGNSRDDQCIIKHDH. A helical membrane pass occupies residues 179–202; it reads IVSTIYSTFGAFYIPLVLILILYY. The Cytoplasmic segment spans residues 203 to 291; that stretch reads KIYRAARTLY…KISGTRERKA (89 aa). The helical transmembrane segment at 292 to 315 threads the bilayer; sequence ATTLGLILGAFVICWLPFFVKELV. Over 316-327 the chain is Extracellular; the sequence is VNICEKCKISEE. Residues 328–350 traverse the membrane as a helical segment; that stretch reads MSNFLAWLGYLNSLINPLIYTIF. The NPxxY motif; important for ligand-induced conformation changes and signaling signature appears at 343–347; the sequence is NPLIY. Over 351–366 the chain is Cytoplasmic; sequence NEDFKKAFQKLVRCRN.

The protein belongs to the G-protein coupled receptor 1 family.

The protein localises to the cell membrane. In terms of biological role, G-protein coupled receptor for 5-hydroxytryptamine (serotonin). Also functions as a receptor for various alkaloids and psychoactive substances. Ligand binding causes a conformation change that triggers signaling via guanine nucleotide-binding proteins (G proteins) and modulates the activity of downstream effectors, such as adenylate cyclase. HTR1F is coupled to G(i)/G(o) G alpha proteins and mediates inhibitory neurotransmission by inhibiting adenylate cyclase activity. The sequence is that of 5-hydroxytryptamine receptor 1F (Htr1f) from Rattus norvegicus (Rat).